The chain runs to 246 residues: E3 ubiquitin-protein ligase MARCHF2 (246 aa).

The segment at 56-116 (DTPSDGPFCR…ELCHTEFAVE (61 aa)) adopts an RING-CH-type zinc-finger fold. Residues 56 to 116 (DTPSDGPFCR…ELCHTEFAVE (61 aa)) are required for inhibition of HIV-1 virus production and VSV G protein expression. C64, C67, C80, C82, H90, C93, C106, and C109 together coordinate Zn(2+). The required for interaction with IKBKG stretch occupies residues 121-246 (PLTEWLKDPG…LKKVAEETPV (126 aa)). 2 helical membrane passes run 138–158 (LCCD…SGWL) and 175–195 (AVGL…WTLV).

In terms of assembly, interacts with STX6; the interaction promotes MARCHF2-mediated ubiquitination and degradation of CFTR. Interacts with MARCHF3. Interacts with GOPC/CAL; the interaction leads to CFTR ubiquitination and degradation. Interacts with CFTR; the interaction leads to CFTR ubiqtuitination and degradation. Interacts (via PDZ domain) with DLG1 (via PDZ domains); the interaction leads to DLG1 ubiqtuitination and degradation. Interacts with ERGIC3. Interacts with ADRB2. Interacts with IKBKG/NEMO; during the late stages of macrophage viral and bacterial infection; the interaction leads to ubiquitination and degradation of IKBKG/NEMO. Broadly expressed.

It localises to the endoplasmic reticulum membrane. The protein localises to the lysosome membrane. It is found in the endosome membrane. Its subcellular location is the golgi apparatus membrane. The protein resides in the cytoplasm. It localises to the cell membrane. It catalyses the reaction S-ubiquitinyl-[E2 ubiquitin-conjugating enzyme]-L-cysteine + [acceptor protein]-L-lysine = [E2 ubiquitin-conjugating enzyme]-L-cysteine + N(6)-ubiquitinyl-[acceptor protein]-L-lysine.. The protein operates within protein modification; protein ubiquitination. In terms of biological role, E3 ubiquitin-protein ligase that may mediate ubiquitination of TFRC and CD86, and promote their subsequent endocytosis and sorting to lysosomes via multivesicular bodies. E3 ubiquitin ligases accept ubiquitin from an E2 ubiquitin-conjugating enzyme in the form of a thioester and then directly transfer the ubiquitin to targeted substrates. Together with GOPC/CAL mediates the ubiquitination and lysosomal degradation of CFTR. Ubiquitinates and therefore mediates the degradation of DLG1. Regulates the intracellular trafficking and secretion of alpha1-antitrypsin/SERPINA1 and HP/haptoglobin via ubiquitination and degradation of the cargo receptor ERGIC3. Negatively regulates the antiviral and antibacterial immune response by repression of the NF-kB and type 1 IFN signaling pathways, via MARCHF2-mediated K48-linked polyubiquitination of IKBKG/NEMO, resulting in its proteasomal degradation. May be involved in endosomal trafficking through interaction with STX6. Functionally, (Microbial infection) Positively regulates the degradation of Vesicular stomatitis virus (VSV) G protein via the lysosomal degradation pathway. Represses HIV-1 viral production and may inhibit the translocation of HIV-1 env to the cell surface, resulting in decreased viral cell-cell transmission. This chain is E3 ubiquitin-protein ligase MARCHF2, found in Homo sapiens (Human).